The primary structure comprises 909 residues: E3 ubiquitin-protein ligase HACE1 (909 aa).

The segment at 1-21 (MERAMEQLNRLTRSLRRARTV) is N-terminal helix important for homodimerization. ANK repeat units lie at residues 23–55 (LPEDNETAVYTLMPMVMADQHRSVSELLSNSKF), 64–93 (VKRSLLHIAANCGSVECLVLLLKKGANPNY), 97–126 (SGCTPLHLAARNGQKKCMSKLLEYSADVNI), 130–159 (EGLTAIHWLAVNGRTELLHDLVQHVSDVDV), 163–192 (MGQTALHVACQNGHKTTVQCLLDSGADINR), 196–226 (SGATPLYFACSHGQRDTAQILLLRGAKYLPD), and 228–253 (NGVTPLDLCVQGGYGETCEVLIQYHP). Residues 398-433 (QDQDAASIPPFEPPGPGSYENLSTGTRESKPDALAG) form a disordered region. The region spanning 574 to 909 (NCAKLKQGIA…HCGSYGYTMA (336 aa)) is the HECT domain. Catalysis depends on cysteine 876, which acts as the Glycyl thioester intermediate.

In terms of assembly, homodimer. The homodimer is autoinhibited and stabilized by its N-terminal helix. Interacts with RAB1 (RAB1A, RAB1B or RAB1C), RAB4 (RAB4A or RAB4B) and RAB11 (RAB11A or RAB11B); in a GTP-dependent manner. Interacts with the 26S proteasomal complex through the 20S core proteasomal subunit. Interacts with RARB. In terms of processing, autoubiquitinated. Expressed in multiple tissues including heart, brain and kidney.

It localises to the golgi apparatus. The protein resides in the golgi stack membrane. Its subcellular location is the cytoplasm. The protein localises to the endoplasmic reticulum. It catalyses the reaction S-ubiquitinyl-[E2 ubiquitin-conjugating enzyme]-L-cysteine + [acceptor protein]-L-lysine = [E2 ubiquitin-conjugating enzyme]-L-cysteine + N(6)-ubiquitinyl-[acceptor protein]-L-lysine.. It functions in the pathway protein modification; protein ubiquitination. Its activity is regulated as follows. Sterically autoinhibited in its dimeric state. In terms of biological role, E3 ubiquitin-protein ligase involved in Golgi membrane fusion and regulation of small GTPases. Acts as a regulator of Golgi membrane dynamics during the cell cycle: recruited to Golgi membrane by Rab proteins and regulates postmitotic Golgi membrane fusion. Acts by mediating ubiquitination during mitotic Golgi disassembly, ubiquitination serving as a signal for Golgi reassembly later, after cell division. Specifically binds GTP-bound RAC1, mediating ubiquitination and subsequent degradation of active RAC1, thereby playing a role in host defense against pathogens. May also act as a transcription regulator via its interaction with RARB. This chain is E3 ubiquitin-protein ligase HACE1 (HACE1), found in Homo sapiens (Human).